The following is a 123-amino-acid chain: Large ribosomal subunit protein uL14 (123 aa).

Belongs to the universal ribosomal protein uL14 family. In terms of assembly, part of the 50S ribosomal subunit. Forms a cluster with proteins L3 and L19. In the 70S ribosome, L14 and L19 interact and together make contacts with the 16S rRNA in bridges B5 and B8.

In terms of biological role, binds to 23S rRNA. Forms part of two intersubunit bridges in the 70S ribosome. This Actinobacillus succinogenes (strain ATCC 55618 / DSM 22257 / CCUG 43843 / 130Z) protein is Large ribosomal subunit protein uL14.